The following is a 397-amino-acid chain: MNIHEYQAKALLRSYGAPVSDGRVVLKADEAKSAAGELGGPLWVVKAQIHAGGRGKGKFKEPEAGEKGGVRLAKSVGEAAELAKQMLGRTLVTHQTGPAGKQVNRIYIEEGSDIARELYLALLVDRGTSRISFVVSTEGGMDIEEVAASTPEKIVSFSVDPASGLSDFHGRRVAFALGLEGAQVKQCVQLVKNLYRAFVEKDMEMLEINPLIVMTDGNLKVLDAKVGFDNNALYRQSDVMALRDETEEDPKELAASKFDLNYIALDGEIGCMVNGAGLAMATMDIIKLYGAEPANFLDVGGGATKEKVTEAFKIITSDPNVKGILVNIFGGIMRCDIIAEGIIAAVKEVGLQVPLVVRLEGTNVEKGKEIIANSGLNVIAGDNLSDAAQKIVKAVKG.

The region spanning 9 to 254 (KALLRSYGAP…ETEEDPKELA (246 aa)) is the ATP-grasp domain. ATP-binding positions include K46, 53 to 55 (GRG), E109, S112, and E117. Positions 209 and 223 each coordinate Mg(2+). Substrate contacts are provided by residues N274 and 331-333 (GIM).

The protein belongs to the succinate/malate CoA ligase beta subunit family. Heterotetramer of two alpha and two beta subunits. Requires Mg(2+) as cofactor.

The enzyme catalyses succinate + ATP + CoA = succinyl-CoA + ADP + phosphate. It carries out the reaction GTP + succinate + CoA = succinyl-CoA + GDP + phosphate. Its pathway is carbohydrate metabolism; tricarboxylic acid cycle; succinate from succinyl-CoA (ligase route): step 1/1. In terms of biological role, succinyl-CoA synthetase functions in the citric acid cycle (TCA), coupling the hydrolysis of succinyl-CoA to the synthesis of either ATP or GTP and thus represents the only step of substrate-level phosphorylation in the TCA. The beta subunit provides nucleotide specificity of the enzyme and binds the substrate succinate, while the binding sites for coenzyme A and phosphate are found in the alpha subunit. In Cereibacter sphaeroides (strain ATCC 17029 / ATH 2.4.9) (Rhodobacter sphaeroides), this protein is Succinate--CoA ligase [ADP-forming] subunit beta.